We begin with the raw amino-acid sequence, 252 residues long: Ribonuclease HII (252 aa).

The 185-residue stretch at 68 to 252 folds into the RNase H type-2 domain; the sequence is EYVAGLDEVG…FGPVRDRLRS (185 aa). Residues aspartate 74, glutamate 75, and aspartate 165 each coordinate a divalent metal cation.

Belongs to the RNase HII family. Mn(2+) serves as cofactor. The cofactor is Mg(2+).

The protein localises to the cytoplasm. The enzyme catalyses Endonucleolytic cleavage to 5'-phosphomonoester.. Its function is as follows. Endonuclease that specifically degrades the RNA of RNA-DNA hybrids. The protein is Ribonuclease HII of Lacticaseibacillus paracasei (strain ATCC 334 / BCRC 17002 / CCUG 31169 / CIP 107868 / KCTC 3260 / NRRL B-441) (Lactobacillus paracasei).